We begin with the raw amino-acid sequence, 84 residues long: Small ribosomal subunit protein uS17 (84 aa).

The protein belongs to the universal ribosomal protein uS17 family. As to quaternary structure, part of the 30S ribosomal subunit.

Functionally, one of the primary rRNA binding proteins, it binds specifically to the 5'-end of 16S ribosomal RNA. The chain is Small ribosomal subunit protein uS17 from Actinobacillus pleuropneumoniae serotype 5b (strain L20).